The chain runs to 567 residues: Amino-acid acetyltransferase, mitochondrial (567 aa).

The N-acetyltransferase domain occupies 392 to 558; the sequence is KDSPQTNPLH…ARLKEYAKHI (167 aa).

It belongs to the acetyltransferase family.

The protein localises to the mitochondrion. The catalysed reaction is L-glutamate + acetyl-CoA = N-acetyl-L-glutamate + CoA + H(+). It functions in the pathway amino-acid biosynthesis; L-arginine biosynthesis; N(2)-acetyl-L-ornithine from L-glutamate: step 1/4. Its function is as follows. N-acetylglutamate synthase involved in arginine biosynthesis. The polypeptide is Amino-acid acetyltransferase, mitochondrial (ARG2) (Vanderwaltozyma polyspora (strain ATCC 22028 / DSM 70294 / BCRC 21397 / CBS 2163 / NBRC 10782 / NRRL Y-8283 / UCD 57-17) (Kluyveromyces polysporus)).